The following is a 606-amino-acid chain: V-type proton ATPase catalytic subunit A (606 aa).

239 to 246 (GAFGCGKT) is an ATP binding site.

The protein belongs to the ATPase alpha/beta chains family. As to quaternary structure, V-ATPase is a heteromultimeric enzyme made up of two complexes: the ATP-hydrolytic V1 complex and the proton translocation V0 complex. The V1 complex consists of three catalytic AB heterodimers that form a heterohexamer, three peripheral stalks each consisting of EG heterodimers, one central rotor including subunits D and F, and the regulatory subunits C and H. The proton translocation complex V0 consists of the proton transport subunit a, a ring of proteolipid subunits c9c'', rotary subunit d, subunits e and f, and the accessory subunits vah-19/Ac45 and vah-20/PRR.

The enzyme catalyses ATP + H2O + 4 H(+)(in) = ADP + phosphate + 5 H(+)(out). Its function is as follows. Catalytic subunit of the V1 complex of vacuolar(H+)-ATPase (V-ATPase), a multisubunit enzyme composed of a peripheral complex (V1) that hydrolyzes ATP and a membrane integral complex (V0) that translocates protons. V-ATPase is responsible for acidifying and maintaining the pH of intracellular compartments and in some cell types, is targeted to the plasma membrane, where it is responsible for acidifying the extracellular environment. Required along with other vacuolar ATPase components for the removal of protein aggregates which form in immature oocytes in the distal gonad. This removal occurs as the oocytes mature and move to the proximal gonad, is triggered by the introduction of sperm through mating and occurs before fertilization. The introduction of sperm triggers V-ATPase accumulation in proximal oocytes and induces lysosomal acidification which leads to engulfing of protein aggregates by lysosomes and subsequent clearance of the aggregates. Lysosomal acidification also leads to changes in mitochondrial morphology and function. Mitochondria in distal immature oocytes are fragmented, produce high levels of reactive oxygen species (ROS) and have high membrane potential, indicative of metabolic inactivity. In contrast, mitochondria in proximal mature oocytes are tubular with lower ROS levels and membrane potential, indicative of an active metabolic state required for aggregate mobilization before clearance. Involved in receptor-mediated endocytosis. This chain is V-type proton ATPase catalytic subunit A, found in Caenorhabditis briggsae.